A 363-amino-acid chain; its full sequence is NAD(P)H-quinone oxidoreductase subunit 1, chloroplastic (363 aa).

The next 6 membrane-spanning stretches (helical) occupy residues 30–50, 104–124, 127–147, 248–268, 300–320, and 343–363; these read LIPI…IVWL, IAVI…HLVL, LSIG…GLLM, YSGI…LVSS, VFGT…FLFI, and FLLP…LISL.

This sequence belongs to the complex I subunit 1 family. As to quaternary structure, NDH is composed of at least 16 different subunits, 5 of which are encoded in the nucleus.

Its subcellular location is the plastid. It is found in the chloroplast thylakoid membrane. It catalyses the reaction a plastoquinone + NADH + (n+1) H(+)(in) = a plastoquinol + NAD(+) + n H(+)(out). The enzyme catalyses a plastoquinone + NADPH + (n+1) H(+)(in) = a plastoquinol + NADP(+) + n H(+)(out). Its function is as follows. NDH shuttles electrons from NAD(P)H:plastoquinone, via FMN and iron-sulfur (Fe-S) centers, to quinones in the photosynthetic chain and possibly in a chloroplast respiratory chain. The immediate electron acceptor for the enzyme in this species is believed to be plastoquinone. Couples the redox reaction to proton translocation, and thus conserves the redox energy in a proton gradient. The chain is NAD(P)H-quinone oxidoreductase subunit 1, chloroplastic from Lactuca sativa (Garden lettuce).